Consider the following 611-residue polypeptide: Sodium-coupled monocarboxylate transporter 1 (611 aa).

Residues 1–9 (MDASRDIGS) are Extracellular-facing. Residues 10 to 30 (FVVWDYVVFAGMLLISAAIGI) traverse the membrane as a helical segment. The Cytoplasmic segment spans residues 31 to 51 (YYAFAGGGQQTSKDFLMGGRS). The chain crosses the membrane as a helical span at residues 52–72 (MSAVPVALSLTASFMSAVTVL). Residues 73–86 (GTPAEVYRFGAIFS) lie on the Extracellular side of the membrane. The helical transmembrane segment at 87 to 107 (IFVITYFFVVVISAEVFLPVF) threads the bilayer. Residues 108-132 (YRLGITSTYEYLELRFNRCIRLCGT) are Cytoplasmic-facing. A helical transmembrane segment spans residues 133-153 (ILFIVQTILYTGIVIYAPALA). The Extracellular portion of the chain corresponds to 154-161 (LNQVTGFD). Residues 162 to 182 (LWGAVVATGVVCTFYCTLGGL) form a helical membrane-spanning segment. The Cytoplasmic segment spans residues 183-184 (KA). The helical transmembrane segment at 185–205 (VVWTDVFQVGIMVAGFASVII) threads the bilayer. Residues 206 to 239 (QASITQHGINKILSDAFNGGRLNFWNFDPNPLQR) lie on the Extracellular side of the membrane. Residues 240-260 (HTFWTIVIGGTFTWTTIYGVN) traverse the membrane as a helical segment. At 261–279 (QSQVQRYISCKSRLHAKLS) the chain is on the cytoplasmic side. A helical transmembrane segment spans residues 280–300 (LYVNLVGLWVILTCSIFCGLA). Over 301 to 336 (LYSRYRECDPWTSKKVSAIDQLMPYLVLDILKNYPG) the chain is Extracellular. The chain crosses the membrane as a helical span at residues 337-359 (VPGLFVACAYSGTLSTVSSSINA). Residues 360–389 (LAAVTVEDLIKPRFKSLSEKSLSWISQGMS) are Cytoplasmic-facing. A helical membrane pass occupies residues 390-410 (VLYGALCIGMAALASLMGALL). Residues 411–415 (QAALS) lie on the Extracellular side of the membrane. The helical transmembrane segment at 416–436 (IFGMVGGPLLGLFSLGILVPF) threads the bilayer. The Cytoplasmic segment spans residues 437-439 (ANS). A helical membrane pass occupies residues 440–460 (IGALTGLLAGFAISLWVGIGA). Residues 461–518 (QLYPPLPERTLPLPLETYGCNITHNGSDWMSTTEMPFSTSAFQIHNAERTPLMDNWYS) lie on the Extracellular side of the membrane. An N-linked (GlcNAc...) asparagine glycan is attached at asparagine 485. The helical transmembrane segment at 519–539 (LSYLYFSTIGTLTTLFVGILI) threads the bilayer. Over 540 to 611 (SLSTGGRKQN…HSGKINGTRL (72 aa)) the chain is Cytoplasmic. The PDZ-binding signature appears at 609-611 (TRL).

This sequence belongs to the sodium:solute symporter (SSF) (TC 2.A.21) family. As to quaternary structure, interacts (via PDZ-binding motif) with PDZK1 (via PDZ domains 1 and 3); interaction increases nicotinate transport activity of SLC5A8. Expressed in brain, colon, kidney and in the ileum and jejunum of small intestine. In the kidney, expression occurred in the proximal tubule and the loop of Henle, being restricted to tubular epithelial cells in both the cortex and the medulla. In the colon, predominantly expressed in the distal half of the large bowel and in the most terminal ileum. Localized selectively in the luminal surface of crypts in the large intestine and to the brush border in the middle parts of crypts in the cecum. In the brain, expression was seen throughout, exclusively in neurons, including the cortex, hippocampus, cerebellum and pituitary gland (at protein level). Expression is reduced in oligodendrogliomas.

The protein localises to the apical cell membrane. The catalysed reaction is (S)-lactate(out) + 2 Na(+)(out) = (S)-lactate(in) + 2 Na(+)(in). The enzyme catalyses propanoate(out) + 2 Na(+)(out) = propanoate(in) + 2 Na(+)(in). It carries out the reaction pyruvate(out) + 2 Na(+)(out) = pyruvate(in) + 2 Na(+)(in). It catalyses the reaction acetate(out) + 2 Na(+)(out) = acetate(in) + 2 Na(+)(in). The catalysed reaction is butanoate(out) + 2 Na(+)(out) = butanoate(in) + 2 Na(+)(in). The enzyme catalyses nicotinate(out) + 2 Na(+)(out) = nicotinate(in) + 2 Na(+)(in). It carries out the reaction (R)-3-hydroxybutanoate(out) + 2 Na(+)(out) = (R)-3-hydroxybutanoate(in) + 2 Na(+)(in). It catalyses the reaction acetoacetate(out) + 2 Na(+)(out) = acetoacetate(in) + 2 Na(+)(in). The catalysed reaction is 4-methyl-2-oxopentanoate(out) + 2 Na(+)(out) = 4-methyl-2-oxopentanoate(in) + 2 Na(+)(in). The enzyme catalyses 5-oxo-L-proline(out) + 2 Na(+)(out) = 5-oxo-L-proline(in) + 2 Na(+)(in). It carries out the reaction iodide(out) = iodide(in). It catalyses the reaction chloride(in) = chloride(out). The catalysed reaction is nitrate(in) = nitrate(out). The enzyme catalyses bromide(in) = bromide(out). With respect to regulation, transport of D-lactate and pyruvate stimulated by alpha-cyano-4-hydroxycinnamic acid, but inhibited by the short-chain fatty acids acetate, propionate and butyrate. Functionally, acts as an electrogenic sodium (Na(+)) and chloride (Cl-)-dependent sodium-coupled solute transporter, including transport of monocarboxylates (short-chain fatty acids including L-lactate, D-lactate, pyruvate, acetate, propionate, valerate and butyrate), mocarboxylate drugs (nicotinate, benzoate, salicylate and 5-aminosalicylate) and ketone bodies (beta-D-hydroxybutyrate, acetoacetate and alpha-ketoisocaproate), with a Na(+):substrate stoichiometry of between 4:1 and 2:1. Catalyzes passive carrier mediated diffusion of iodide. Mediates iodide transport from the thyrocyte into the colloid lumen through the apical membrane. May be responsible for the absorption of D-lactate and monocarboxylate drugs from the intestinal tract. May play a critical role in the entry of L-lactate and ketone bodies into neurons by a process driven by an electrochemical Na(+) gradient and hence contribute to the maintenance of the energy status and function of neurons. Mediates sodium-coupled electrogenic transport of pyroglutamate (5-oxo-L-proline). Can mediate the transport of chloride, bromide, iodide and nitrate ions when external concentration of sodium ions is reduced. In Mus musculus (Mouse), this protein is Sodium-coupled monocarboxylate transporter 1.